Here is a 361-residue protein sequence, read N- to C-terminus: Phospho-N-acetylmuramoyl-pentapeptide-transferase (361 aa).

A run of 10 helical transmembrane segments spans residues 28-48 (LAIIITLSLSFITGPILIEFL), 74-94 (TMGGIMIILSSCLSTLLLADL), 99-119 (IWITLFGFISFGIIGFMDDYA), 133-153 (SKLLLQGIISVIICVLLEYLD), 168-188 (LSLDLGYCYIVFAIFVIVGSS), 203-223 (VPIAFTAGSFALISYLVGNLI), 236-256 (TGELTVLCAGLVGSCLGFLWF), 263-283 (VFMGDTGSLSLGGVLGIISVI), 288-308 (IVLAIVGGLFVIETASVILQV), and 338-358 (KVVIRFWIISVIFALIGLSSL).

Belongs to the glycosyltransferase 4 family. MraY subfamily. Mg(2+) serves as cofactor.

The protein resides in the cell membrane. The enzyme catalyses UDP-N-acetyl-alpha-D-muramoyl-L-alanyl-gamma-D-glutamyl-meso-2,6-diaminopimeloyl-D-alanyl-D-alanine + di-trans,octa-cis-undecaprenyl phosphate = di-trans,octa-cis-undecaprenyl diphospho-N-acetyl-alpha-D-muramoyl-L-alanyl-D-glutamyl-meso-2,6-diaminopimeloyl-D-alanyl-D-alanine + UMP. Its pathway is cell wall biogenesis; peptidoglycan biosynthesis. In terms of biological role, catalyzes the initial step of the lipid cycle reactions in the biosynthesis of the cell wall peptidoglycan: transfers peptidoglycan precursor phospho-MurNAc-pentapeptide from UDP-MurNAc-pentapeptide onto the lipid carrier undecaprenyl phosphate, yielding undecaprenyl-pyrophosphoryl-MurNAc-pentapeptide, known as lipid I. This Rickettsia rickettsii protein is Phospho-N-acetylmuramoyl-pentapeptide-transferase.